Here is a 673-residue protein sequence, read N- to C-terminus: Bifunctional lycopene cyclase/phytoene synthase (673 aa).

Residues 1-251 form a lycopene beta-cyclase region; sequence MTALAYYQIH…IVLGLSACDH (251 aa). Transmembrane regions (helical) follow at residues 9–29, 36–56, 81–101, 117–137, 157–177, 187–207, and 226–246; these read IHLIYTLPILGLLGLLTSPIL, KISILVFIAFSATTPWDSWII, YEEYAFFVIQTVITGLVYVLA, SALSLALKALIPLPIIYLFTA, LSLLITPPTMLLAALSGEYAF, TIAAIMIPTVYLIWVDYVAVG, and VLPIEEAMFFLLTNLMIVLGL. The phytoene synthase stretch occupies residues 258–673; that stretch reads LHGRTIYGNK…SVVMSGWEGQ (416 aa). Positions 376–399 are disordered; the sequence is KILSSPLLPPSHPSRPTGMYPLPP.

In the N-terminal section; belongs to the lycopene beta-cyclase family. It in the C-terminal section; belongs to the phytoene/squalene synthase family.

It is found in the membrane. The enzyme catalyses all-trans-lycopene = gamma-carotene. It carries out the reaction gamma-carotene = all-trans-beta-carotene. The catalysed reaction is 2 (2E,6E,10E)-geranylgeranyl diphosphate = 15-cis-phytoene + 2 diphosphate. It participates in carotenoid biosynthesis; beta-carotene biosynthesis. Its pathway is carotenoid biosynthesis; phytoene biosynthesis; all-trans-phytoene from geranylgeranyl diphosphate: step 1/1. Functionally, bifunctional enzyme that catalyzes the reactions from geranylgeranyl diphosphate to phytoene (phytoene synthase) and lycopene to beta-carotene via the intermediate gamma-carotene (lycopene cyclase). The cyclase preferentially catalyzes the symmetric cyclization of both ends of the substrate to produce dicyclic carotenoids. Beta-carotene is further processed to the acidic carotenoid astaxanthin. The protein is Bifunctional lycopene cyclase/phytoene synthase of Phaffia rhodozyma (Yeast).